The primary structure comprises 191 residues: MPSENPIGKTMKSIDEQSLHNARRLFESGDIDRIEVGTTAGLQQIHRYLFGGLYDFAGQIREDNISKGGFRFANAMYLKEALVKIEQMPERTFEEIIAKYVEMNIAHPFLEGNGRSTRIWLDLVLKKNLKKVVNWQNVSKTLYLQAMERSPVNDLELRFLLKDNLTDDVDNREIIFKGIEQSYYYEGYEKG.

One can recognise a Fido domain in the interval 37–162 (GTTAGLQQIH…NDLELRFLLK (126 aa)). Residues Lys-67, 104–107 (NIAH), 112–118 (GNGRSTR), and 140–143 (KTLY) each bind ATP. The short motif at 182 to 187 (SYYYEG) is the Inhibitory (S/T)XXXE(G/N) motif element. Tyr-183 is subject to O-AMP-tyrosine; in vitro. Glu-186 is a binding site for ATP.

In terms of assembly, homodimer. Auto-AMPylation at Tyr-183 in vitro.

It catalyses the reaction L-tyrosyl-[protein] + ATP = O-(5'-adenylyl)-L-tyrosyl-[protein] + diphosphate. It carries out the reaction L-threonyl-[protein] + ATP = 3-O-(5'-adenylyl)-L-threonyl-[protein] + diphosphate. With respect to regulation, adenylyltransferase activity is inhibited by the inhibitory helix present at the C-terminus: Glu-186 binds ATP and competes with ATP-binding at Arg-118, thereby preventing adenylyltransferase activity. Activation dissociates ATP-binding from Glu-186, allowing ordered binding of the entire ATP moiety with the alpha-phosphate in an orientation that is productive for accepting an incoming target hydroxyl side chain. Functionally, adenylyltransferase that mediates the addition of adenosine 5'-monophosphate (AMP) to specific residues of target proteins. In Neisseria meningitidis serogroup B (strain ATCC BAA-335 / MC58), this protein is Protein adenylyltransferase NmFic.